A 652-amino-acid chain; its full sequence is 2',3'-cyclic-nucleotide 2'-phosphodiesterase/3'-nucleotidase (652 aa).

An N-terminal signal peptide occupies residues 1-24 (MFKRPLTLSLLASLIALTTSTAQA). A divalent metal cation is bound by residues D36, H38, D81, N121, H230, H262, and H264. Substrate is bound by residues Y445 and 549–555 (YRAYSGK).

The protein belongs to the 5'-nucleotidase family. The cofactor is a divalent metal cation.

The protein resides in the periplasm. It carries out the reaction a nucleoside 2',3'-cyclic phosphate + H2O = a nucleoside 3'-phosphate + H(+). The enzyme catalyses a ribonucleoside 3'-phosphate + H2O = a ribonucleoside + phosphate. Its function is as follows. This bifunctional enzyme catalyzes two consecutive reactions during ribonucleic acid degradation. Converts a 2',3'-cyclic nucleotide to a 3'-nucleotide and then the 3'-nucleotide to the corresponding nucleoside and phosphate. In Yersinia enterocolitica, this protein is 2',3'-cyclic-nucleotide 2'-phosphodiesterase/3'-nucleotidase (cpdB).